We begin with the raw amino-acid sequence, 1586 residues long: Zinc finger protein GLI2 (1586 aa).

The span at 1–10 (METSASATAS) shows a compositional bias: polar residues. The interval 1 to 22 (METSASATASEKQEAKSGILEA) is disordered. Residue valine 50 forms a Glycyl lysine isopeptide (Lys-Gly) (interchain with G-Cter in SUMO2) linkage. Phosphoserine is present on residues serine 149, serine 234, serine 236, and serine 242. Over residues 342-367 (SSSSNCLSDTNQNKQSSESAVSSTVN) the composition is skewed to polar residues. The segment at 342 to 389 (SSSSNCLSDTNQNKQSSESAVSSTVNPVAIHKRSKVKTEPEGLRPASP) is disordered. Serine 388 carries the phosphoserine; by DYRK2 modification. The C2H2-type 1 zinc-finger motif lies at 437–464 (TNCHWEDCTKEYDTQEQLVHHINNEHIH). Residues 475-497 (QACTREQKPFKAQYMLVVHMRRH) form a C2H2-type 2; degenerate zinc finger. C2H2-type zinc fingers lie at residues 503–527 (HKCT…LRSH), 533–558 (YVCE…NRTH), and 564–589 (YICK…KTVH). 2 disordered regions span residues 577 to 636 (DPSS…TSQA) and 650 to 716 (SSGL…SAGG). The span at 589–605 (HGPDAHVTKKQRNDVHL) shows a compositional bias: basic and acidic residues. Low complexity predominate over residues 654–674 (CQSSPGAQSSCSSEPSPLGSA). Threonine 725 is modified (phosphothreonine). 5 disordered regions span residues 742–879 (DSCS…SGLL), 925–1030 (RTLP…RPPS), 1182–1215 (QYPG…PSQG), 1421–1441 (MGNM…GAPD), and 1469–1498 (MRSQ…QVSS). The residue at position 757 (lysine 757) is an N6-acetyllysine; by EP300. Residues 791–802 (LSASEVTMLSQL) are compositionally biased toward polar residues. 2 stretches are compositionally biased toward low complexity: residues 809–824 (STST…RRSS) and 947–961 (GHGH…PHEA). A compositionally biased stretch (basic and acidic residues) spans 968–977 (RASDPVRRPD). Position 1011 is a phosphoserine; by DYRK2 (serine 1011). A compositionally biased stretch (polar residues) spans 1469 to 1485 (MRSQPPQPQACQDSIQP).

Belongs to the GLI C2H2-type zinc-finger protein family. In terms of assembly, interaction with ZIC1 and ZIC2. Interacts with STK36. Interacts with SUFU; this inhibits transcriptional activation mediated by GLI2. Interacts (via C-terminal internal region) with FOXC1 (via N-terminus); this interaction is direct and increases GLI2 DNA-binding and transcriptional activity through a smoothened (SMO)-independent Hedgehog (Hh) signaling pathway. Post-translationally, phosphorylated in vitro by ULK3. Phosphorylated by DYRK2; this inhibits GLI2 transcription factor activity and promotes proteasomal degradation of GLI2. Acetylation at Lys-757 inhibits Hh target gene expression, probably by impeding entry into chromatin thus preventing promoter occupancy. In terms of tissue distribution, expressed in breast cancers (at protein level). Isoform 1 and isoform 4 are expressed in HTLV-1-infected T-cell lines (at protein level). Isoform 1 and isoform 2 are strongly expressed in HTLV-1-infected T-cell lines. Isoform 3 and isoform 4 are weakly expressed in HTLV-1-infected T-cell lines.

It localises to the nucleus. The protein localises to the cytoplasm. The protein resides in the cell projection. Its subcellular location is the cilium. Functionally, functions as a transcription regulator in the hedgehog (Hh) pathway. Functions as a transcriptional activator. May also function as transcriptional repressor. Requires STK36 for full transcriptional activator activity. Required for normal embryonic development. In terms of biological role, involved in the smoothened (SHH) signaling pathway. Acts as a transcriptional activator in T-cell leukemia virus type 1 (HTLV-1)-infected cells in a Tax-dependent manner. Binds to the DNA sequence 5'-GAACCACCCA-3' which is part of the Tax-responsive element (TRE-2S) regulatory element that augments the Tax-dependent enhancer of HTLV-1. Its function is as follows. (Microbial infection) Acts as a transcriptional activators in T-cell leukemia virus type 1 (HTLV-1)-infected cells in a Tax-dependent manner. Binds to the DNA sequence 5'-GAACCACCCA-3' which is part of the Tax-responsive element (TRE-2S) regulatory element that augments the Tax-dependent enhancer of HTLV-1. Functionally, acts as a transcriptional repressor. The sequence is that of Zinc finger protein GLI2 from Homo sapiens (Human).